The chain runs to 367 residues: CCN family member 4 (367 aa).

Residues 1 to 22 form the signal peptide; that stretch reads MRWFLPWTLAAVTAAAASTVLA. The IGFBP N-terminal domain maps to 45-118; that stretch reads RPQFCKWPCE…RYAIGVCAQV (74 aa). Cystine bridges form between C49–C73, C53–C75, C55–C76, and C62–C79. A glycan (N-linked (GlcNAc...) asparagine) is linked at N86. 2 cysteine pairs are disulfide-bonded: C87–C101 and C93–C115. The region spanning 121-186 is the VWFC domain; the sequence is VGCVLDGVRY…GHCCEQWVCE (66 aa). An N-linked (GlcNAc...) asparagine glycan is attached at N143. A TSP type-1 domain is found at 215–260; it reads NCIAYTSPWSPCSTSCGLGVSTRISNVNAQCWPEQESRLCNLRPCD. 5 cysteine pairs are disulfide-bonded: C273–C310, C290–C324, C301–C340, C304–C342, and C309–C346. The 75-residue stretch at 273–347 folds into the CTCK domain; it reads CLAVYQPEAS…NACFCNLSCR (75 aa). An N-linked (GlcNAc...) asparagine glycan is attached at N284. The N-linked (GlcNAc...) asparagine glycan is linked to N343.

This sequence belongs to the CCN family. As to expression, expressed in heart, kidney, lung, pancreas, placenta, ovary, small intestine and spleen. Isoform 2 is expressed predominantly in scirrhous gastric carcinoma and, weakly in placenta. Overexpression is associated with several cancers including breast cancer and colon tumors. Isoform 2 is overexpressed in scirrhous gastric carcinoma.

The protein localises to the secreted. Downstream regulator in the Wnt/Frizzled-signaling pathway. Associated with cell survival. Attenuates p53-mediated apoptosis in response to DNA damage through activation of AKT kinase. Up-regulates the anti-apoptotic Bcl-X(L) protein. Adheres to skin and melanoma fibroblasts. In vitro binding to skin fibroblasts occurs through the proteoglycans, decorin and biglycan. The polypeptide is CCN family member 4 (Homo sapiens (Human)).